We begin with the raw amino-acid sequence, 80 residues long: Defensin-like protein 44 (80 aa).

An N-terminal signal peptide occupies residues 1-27; it reads MAITKTSVTLLLLIIMAASLSNFSVLA. Cystine bridges form between Cys-40–Cys-79, Cys-44–Cys-67, Cys-53–Cys-77, and Cys-57–Cys-78.

The protein belongs to the DEFL family.

The protein localises to the secreted. The chain is Defensin-like protein 44 from Arabidopsis thaliana (Mouse-ear cress).